The chain runs to 393 residues: Nucleosome assembly protein 1-like 1 (393 aa).

The segment covering 1–10 (MANIDNKEQT) has biased composition (basic and acidic residues). 2 disordered regions span residues 1-36 (MANI…NSKA) and 132-165 (ECEW…KEDP). 2 stretches are compositionally biased toward acidic residues: residues 11–30 (ELDQ…EAGE) and 132–144 (ECEW…EDIS). The NAP1L motif motif lies at 126–151 (YEPTEEECEWKVDEEEDISGDLKDKA). Positions 145–165 (GDLKDKAKLEEEKKDEEKEDP) are enriched in basic and acidic residues. The short motif at 274 to 280 (IKKKQKH) is the Nuclear localization signal element. Positions 347–378 (AIEDDDDDYDEEGEEADDEEGEEEADEDNDPD) are enriched in acidic residues. The interval 347-393 (AIEDDDDDYDEEGEEADDEEGEEEADEDNDPDYEPKKDQNPAECKQQ) is disordered. The span at 379–393 (YEPKKDQNPAECKQQ) shows a compositional bias: basic and acidic residues.

The protein belongs to the nucleosome assembly protein (NAP) family. Forms homomultimers. Interacts with histone B4. Interacts with the B-type cyclins ccnb1 and ccnb2. Post-translationally, phosphorylated by cyclin B-cdc2 kinase complexes.

Its subcellular location is the cytoplasm. It localises to the nucleus. In terms of biological role, acts as a chaperone for the linker histone to facilitate deposition of histone B4 onto linker DNA. Required for both remodeling of sperm chromatin into nucleosomes, and linker histone binding to nucleosome core dimers. Plays a role in tissue-specific gene regulation. Required for primitive hemopoiesis, acting upstream of tal1/scl. This Xenopus tropicalis (Western clawed frog) protein is Nucleosome assembly protein 1-like 1.